The primary structure comprises 122 residues: MREILLIGLGGFFGAILRYLVSGIIPVKFGIPTGTLIVNLLGSFIIGFLIYSSLFGSLSTEYRLFIITGFCGALTTFSTFSYESFTMLEHNYYLKTGLNILLNVFGCLGMVYLGRLASMFFW.

4 consecutive transmembrane segments (helical) span residues 4–24 (ILLIGLGGFFGAILRYLVSGI), 36–56 (LIVNLLGSFIIGFLIYSSLFG), 65–85 (FIITGFCGALTTFSTFSYESF), and 100–120 (ILLNVFGCLGMVYLGRLASMF). Na(+) is bound by residues Gly72 and Thr75.

This sequence belongs to the fluoride channel Fluc/FEX (TC 1.A.43) family.

Its subcellular location is the cell membrane. It catalyses the reaction fluoride(in) = fluoride(out). Its activity is regulated as follows. Na(+) is not transported, but it plays an essential structural role and its presence is essential for fluoride channel function. Functionally, fluoride-specific ion channel. Important for reducing fluoride concentration in the cell, thus reducing its toxicity. This Methanococcus maripaludis (strain DSM 14266 / JCM 13030 / NBRC 101832 / S2 / LL) protein is Fluoride-specific ion channel FluC.